Here is a 369-residue protein sequence, read N- to C-terminus: MAKFELYAEVDVSISGHQYPVIICRNGLIDPELINRFITSKQVLIVTNRTVAPLYLGHLQSVLPSKQCDVVILEDGEEHKNQRSLSTIYDSLIQNKHHRDTSIIALGGGVIGDMAGFAASTYQRGVRFIQLPTTLLAQVDASVGGKTAINHPAGKNMIGSFYQPQAVIIDLNTLKTLPEREFRAGIAEMIKYALLVGGSFFERIQAVLQQGLTVHSPELPLLIAECCQVKAKIVEQDERESGVRALLNLGHTFAHALETYTDYKKWLHGEAVAIGLYCAAVLSEKKGLLDKPIVDQVEKMLIHAGLPHKIPNSIDLIQLRELMSLDKKIKNNCLRFVMIKKPGACYIDDSVTEDCLHNTLINVVEGEQK.

NAD(+) contacts are provided by residues D75 to K80, G109 to D113, T133 to T134, K146, K155, and T173 to T176. 3 residues coordinate Zn(2+): E188, H251, and H268.

The protein belongs to the sugar phosphate cyclases superfamily. Dehydroquinate synthase family. The cofactor is Co(2+). Zn(2+) is required as a cofactor. It depends on NAD(+) as a cofactor.

It is found in the cytoplasm. It carries out the reaction 7-phospho-2-dehydro-3-deoxy-D-arabino-heptonate = 3-dehydroquinate + phosphate. Its pathway is metabolic intermediate biosynthesis; chorismate biosynthesis; chorismate from D-erythrose 4-phosphate and phosphoenolpyruvate: step 2/7. Catalyzes the conversion of 3-deoxy-D-arabino-heptulosonate 7-phosphate (DAHP) to dehydroquinate (DHQ). The protein is 3-dehydroquinate synthase of Legionella pneumophila (strain Lens).